The following is a 1166-amino-acid chain: MPTSVLWAVDLFGRVYTLSTAGQYWELCKDVQLEFKRVSAATQCCWGIAGDNQVYLYVCSSDVPIRHREEAYENQRWNPMGGFCEKLLPSDRWPWSDVSGLQHRPLDGVALPSPHWEWESDWYVDENFGGEPTEKGGWTYAMDFPATYTRDKKWNSCVRRRKWIRYRRYKSRDSWAKIPSKDDPKELPDPFNDLSVGGWEITEEPVGRLSVWAVSLQGKVWYREDVSHPNPEGSSWSLVETPGEVVQISCGPHDLIWATLWEGQALVREGVCRNNPKGSYWSMVEPPGSENGIMHVSAGVSVVWAITKDRKVWFRRGVNSHNPCGTSWIEMVGEMTMVNVGLNDQVWGISCEDRAVYFRQGVTPSELSGKTWKAIVVGRESDRSHSGSSSSLLSAGCFFGDEVRGSGTESAPSDTDASLEVERQGPEQPLPKEALDNSTNLKGSLSKGHETSGNTDHSTENACLTEGKEKAPETSRSDECRGPASTPAELPWTNIDLKEPKKVSNQPAAGFPETAGLSSLGLFPMGMEEPYGADDHPLWAWVSGGACAVEAGSTLKWFTIQSGLSPSVQTLSLSITPAQTAAWRKQIFQQLTERTKRELESFRHYEQAVEQSVWVKTGALQWWCDWKPHKWVDVRVALEQFTGHDGARDSILFIYYVVHEEKKYLHVFLNEVTVLVPVLNEAKHSFALYTPERTRQRWPVRLAAATEQDMNDWLALLSLSCCESRKVHGRPSPQAIWSVTCKGDIFVSEPSPDLEARERLLPCDQMFWRQMGGHLRIIEANSRGVVWGIGYDHTAWVYTGGYGGGCFQGLASSTSNIYTQSDVKSVYIYENQRWNPVTGYTSRGLPTDRFMWSDVTGLQECTKAGTKPPSLQWTWVSDWYVDFSVPGGTDQEGWQYASDFPASYHGYKTMKDFVRRRCWARKCKLVTSGPWLEVAPITLSDVSIIPESAHADGRGHNVALWAVSDKGDVLCRLGVSELNPAGSSWLHVGTDQPFASVSIGACYQVWAVARDGSAFYRGSVSPSQPAGDCWYHIPSPPKQKLTQVSVGQTSVYALDENGNLWYRAGITPSYPQGSSWEHVSNNVRKVSVGPLDQVWVIANKVQGSHGLSRGTVCRRMGVQPREPKGQGWDYGIGGGWDHISVRANATRVPRNMSRDREARGPGPVCC.

4 TECPR repeats span residues 209 to 240, 254 to 285, 301 to 332, and 344 to 376; these read LSVW…SLVE, DLIW…SMVE, SVVW…IEMV, and DQVW…KAIV. Phosphoserine is present on residues serine 386, serine 388, serine 391, serine 413, and serine 418. A disordered region spans residues 404-496; sequence RGSGTESAPS…PAELPWTNID (93 aa). Residues 407 to 416 are compositionally biased toward polar residues; sequence GTESAPSDTD. The segment covering 451–462 has biased composition (polar residues); sequence TSGNTDHSTENA. The span at 466–481 shows a compositional bias: basic and acidic residues; that stretch reads EGKEKAPETSRSDECR. The PH domain occupies 616 to 722; it reads KTGALQWWCD…WLALLSLSCC (107 aa). One copy of the TECPR 5 repeat lies at 734–761; sequence QAIWSVTCKGDIFVSEPSPDLEARERLL. At serine 943 the chain carries Phosphoserine. 4 TECPR repeats span residues 958 to 989, 1003 to 1034, 1049 to 1080, and 1092 to 1132; these read VALW…LHVG, YQVW…YHIP, TSVY…EHVS, and DQVW…DYGI.

It belongs to the TECPR1 family. As to quaternary structure, interacts with ATG5; the interaction is direct. Interacts with WIPI2. Interacts with the ATG5-ATG12 conjugate, the interaction is however mutually exclusive with ATG16, since it does not interact with ATG12-ATG5-ATG16 complex.

Its subcellular location is the cytoplasmic vesicle. The protein localises to the autophagosome membrane. It is found in the lysosome membrane. Its function is as follows. Tethering factor involved in autophagy. Involved in autophagosome maturation by promoting the autophagosome fusion with lysosomes: acts by associating with both the ATG5-ATG12 conjugate and phosphatidylinositol-3-phosphate (PtdIns(3)P) present at the surface of autophagosomes. Also involved in selective autophagy against bacterial pathogens, by being required for phagophore/preautophagosomal structure biogenesis and maturation. The chain is Tectonin beta-propeller repeat-containing protein 1 (Tecpr1) from Mus musculus (Mouse).